The following is a 190-amino-acid chain: RRP15-like protein (190 aa).

Over residues 1-11 (MSTKNRDRLVV) the composition is skewed to basic and acidic residues. Disordered stretches follow at residues 1 to 69 (MSTK…TRKE) and 119 to 190 (QKTM…SDED). Positions 55–66 (QRKKKKVIKKLT) are enriched in basic residues. Residues 59–84 (KKVIKKLTRKEQSLKHSVKEYRIKLA) are a coiled coil. The span at 119 to 153 (QKTMSDAVKEKMTARDRKEARERFDGKNFDSDKFA) shows a compositional bias: basic and acidic residues. Acidic residues predominate over residues 167–190 (GEEEDEQMNIGDDEIDAGNYSDED).

Belongs to the RRP15 family.

The sequence is that of RRP15-like protein from Caenorhabditis briggsae.